A 129-amino-acid polypeptide reads, in one-letter code: Small ribosomal subunit protein uS11 (129 aa).

Belongs to the universal ribosomal protein uS11 family. In terms of assembly, part of the 30S ribosomal subunit. Interacts with proteins S7 and S18. Binds to IF-3.

In terms of biological role, located on the platform of the 30S subunit, it bridges several disparate RNA helices of the 16S rRNA. Forms part of the Shine-Dalgarno cleft in the 70S ribosome. In Beijerinckia indica subsp. indica (strain ATCC 9039 / DSM 1715 / NCIMB 8712), this protein is Small ribosomal subunit protein uS11.